The following is a 431-amino-acid chain: Putative F-box/FBD/LRR-repeat protein At4g26350 (431 aa).

Residues Met-1–Asp-47 form the F-box domain. LRR repeat units follow at residues Asn-52–Asn-78, Cys-85–Ile-109, Ile-132–Cys-159, Ile-160–Arg-185, and Cys-309–Asn-334. Residues Cys-348 to Ser-398 enclose the FBD domain.

In Arabidopsis thaliana (Mouse-ear cress), this protein is Putative F-box/FBD/LRR-repeat protein At4g26350.